A 232-amino-acid polypeptide reads, in one-letter code: Phosphoribosylaminoimidazole-succinocarboxamide synthase (232 aa).

The protein belongs to the SAICAR synthetase family.

It catalyses the reaction 5-amino-1-(5-phospho-D-ribosyl)imidazole-4-carboxylate + L-aspartate + ATP = (2S)-2-[5-amino-1-(5-phospho-beta-D-ribosyl)imidazole-4-carboxamido]succinate + ADP + phosphate + 2 H(+). It participates in purine metabolism; IMP biosynthesis via de novo pathway; 5-amino-1-(5-phospho-D-ribosyl)imidazole-4-carboxamide from 5-amino-1-(5-phospho-D-ribosyl)imidazole-4-carboxylate: step 1/2. The protein is Phosphoribosylaminoimidazole-succinocarboxamide synthase of Finegoldia magna (strain ATCC 29328 / DSM 20472 / WAL 2508) (Peptostreptococcus magnus).